Reading from the N-terminus, the 106-residue chain is Small ribosomal subunit protein uS10 (106 aa).

It belongs to the universal ribosomal protein uS10 family. Part of the 30S ribosomal subunit.

Its function is as follows. Involved in the binding of tRNA to the ribosomes. The protein is Small ribosomal subunit protein uS10 of Synechococcus sp. (strain WH7803).